A 368-amino-acid polypeptide reads, in one-letter code: Inner kinetochore subunit MCM21 (368 aa).

The stretch at 1-43 (MSRIDDLQQDIESLLSEINSLEESREKLKAKIKDKRKNEESAN) forms a coiled coil. At Thr88 the chain carries Phosphothreonine.

The protein belongs to the CENP-O/MCM21 family. In terms of assembly, component of the heterotetrameric kinetochore subcomplex COMA, which consists of AME1, CTF19, MCM21 and OKP1. The COMA subcomplex is part of a larger constitutive centromere-associated network (CCAN) (also known as central kinetochore CTF19 complex in yeast), which is composed of at least AME1, CHL4, CNN1, CTF3, CTF19, IML3, MCM16, MCM21, MCM22, MHF1, MHF2, MIF2, NKP1, NKP2, OKP1 and WIP1. COMA binds the centromeric nucleosome-binding protein MIF2, and to the outer kinetochore MIND subcomplex.

It is found in the nucleus. It localises to the chromosome. Its subcellular location is the centromere. The protein resides in the kinetochore. In terms of biological role, component of the kinetochore, a multiprotein complex that assembles on centromeric DNA and attaches chromosomes to spindle microtubules, mediating chromosome segregation and sister chromatid segregation during meiosis and mitosis. Component of the inner kinetochore COMA complex, which connects centromere-associated proteins and the outer kinetochore. COMA interacts with other inner kinetochore proteins to form the inner kinetochore constitutive centromere-associated network (CCAN), which serves as a structural platform for outer kinetochore assembly. In Saccharomyces cerevisiae (strain ATCC 204508 / S288c) (Baker's yeast), this protein is Inner kinetochore subunit MCM21 (MCM21).